The primary structure comprises 344 residues: tRNA N6-adenosine threonylcarbamoyltransferase (344 aa).

Positions 113 and 117 each coordinate Fe cation. Substrate contacts are provided by residues 135–139, aspartate 169, glycine 182, aspartate 186, and asparagine 278; that span reads LVSGG. Residue aspartate 306 participates in Fe cation binding.

The protein belongs to the KAE1 / TsaD family. Fe(2+) is required as a cofactor.

The protein resides in the cytoplasm. The enzyme catalyses L-threonylcarbamoyladenylate + adenosine(37) in tRNA = N(6)-L-threonylcarbamoyladenosine(37) in tRNA + AMP + H(+). In terms of biological role, required for the formation of a threonylcarbamoyl group on adenosine at position 37 (t(6)A37) in tRNAs that read codons beginning with adenine. Is involved in the transfer of the threonylcarbamoyl moiety of threonylcarbamoyl-AMP (TC-AMP) to the N6 group of A37, together with TsaE and TsaB. TsaD likely plays a direct catalytic role in this reaction. This is tRNA N6-adenosine threonylcarbamoyltransferase from Corynebacterium efficiens (strain DSM 44549 / YS-314 / AJ 12310 / JCM 11189 / NBRC 100395).